Consider the following 1995-residue polypeptide: uncharacterized protein (1995 aa).

7 helical membrane-spanning segments follow: residues 31 to 51 (NYTE…EFFK), 53 to 73 (FFSF…PDIA), 106 to 126 (LVIF…ILPT), 157 to 177 (FLWL…WLSL), 212 to 232 (IFLL…PFIS), 254 to 274 (FLLI…SLLQ), and 307 to 327 (ILNF…IPYY). 2 disordered regions span residues 1418-1441 (SLKK…HQFS) and 1848-1883 (DLRW…KTNP). 2 stretches are compositionally biased toward basic residues: residues 1422 to 1441 (SQIK…HQFS) and 1853 to 1863 (PSSRTKQKRKD).

It belongs to the ycf78 family.

It is found in the plastid. It localises to the chloroplast membrane. Its function is as follows. Essential for cell growth. May be involved in binding chloroplast DNA to either the chloroplast envelope or the thylakoid membrane. This is an uncharacterized protein from Chlamydomonas reinhardtii (Chlamydomonas smithii).